Reading from the N-terminus, the 256-residue chain is Cell division protein ZipA (256 aa).

The Periplasmic portion of the chain corresponds to 1 to 6 (MQYGRQ). Residues 7 to 27 (ILICIGILTVIILLLYGLLNS) traverse the membrane as a helical segment. Residues 28 to 256 (YWDRTVTFCK…RHVLSANKST (229 aa)) are Cytoplasmic-facing.

Belongs to the ZipA family. Interacts with FtsZ via their C-terminal domains.

It is found in the cell inner membrane. Its function is as follows. Essential cell division protein that stabilizes the FtsZ protofilaments by cross-linking them and that serves as a cytoplasmic membrane anchor for the Z ring. Also required for the recruitment to the septal ring of downstream cell division proteins. This Baumannia cicadellinicola subsp. Homalodisca coagulata protein is Cell division protein ZipA.